The sequence spans 467 residues: ATP synthase subunit beta (467 aa).

154–161 (GGAGVGKT) is a binding site for ATP.

It belongs to the ATPase alpha/beta chains family. As to quaternary structure, F-type ATPases have 2 components, CF(1) - the catalytic core - and CF(0) - the membrane proton channel. CF(1) has five subunits: alpha(3), beta(3), gamma(1), delta(1), epsilon(1). CF(0) has three main subunits: a(1), b(2) and c(9-12). The alpha and beta chains form an alternating ring which encloses part of the gamma chain. CF(1) is attached to CF(0) by a central stalk formed by the gamma and epsilon chains, while a peripheral stalk is formed by the delta and b chains.

It localises to the cell inner membrane. It catalyses the reaction ATP + H2O + 4 H(+)(in) = ADP + phosphate + 5 H(+)(out). In terms of biological role, produces ATP from ADP in the presence of a proton gradient across the membrane. The catalytic sites are hosted primarily by the beta subunits. In Leptospira interrogans serogroup Icterohaemorrhagiae serovar copenhageni (strain Fiocruz L1-130), this protein is ATP synthase subunit beta.